Consider the following 384-residue polypeptide: Lipid-A-disaccharide synthase (384 aa).

The protein belongs to the LpxB family.

It catalyses the reaction a lipid X + a UDP-2-N,3-O-bis[(3R)-3-hydroxyacyl]-alpha-D-glucosamine = a lipid A disaccharide + UDP + H(+). It participates in bacterial outer membrane biogenesis; LPS lipid A biosynthesis. Functionally, condensation of UDP-2,3-diacylglucosamine and 2,3-diacylglucosamine-1-phosphate to form lipid A disaccharide, a precursor of lipid A, a phosphorylated glycolipid that anchors the lipopolysaccharide to the outer membrane of the cell. This Geobacter metallireducens (strain ATCC 53774 / DSM 7210 / GS-15) protein is Lipid-A-disaccharide synthase.